The primary structure comprises 134 residues: Large ribosomal subunit protein uL16c (134 aa).

It belongs to the universal ribosomal protein uL16 family. In terms of assembly, part of the 50S ribosomal subunit.

Its subcellular location is the plastid. It localises to the chloroplast. This chain is Large ribosomal subunit protein uL16c, found in Nephroselmis olivacea (Green alga).